Here is a 366-residue protein sequence, read N- to C-terminus: 2-aminoethylphosphonate--pyruvate transaminase (366 aa).

Lysine 194 carries the N6-(pyridoxal phosphate)lysine modification.

This sequence belongs to the class-V pyridoxal-phosphate-dependent aminotransferase family. PhnW subfamily. As to quaternary structure, homodimer. It depends on pyridoxal 5'-phosphate as a cofactor.

The catalysed reaction is (2-aminoethyl)phosphonate + pyruvate = phosphonoacetaldehyde + L-alanine. Involved in phosphonate degradation. This Lactiplantibacillus plantarum (strain ATCC BAA-793 / NCIMB 8826 / WCFS1) (Lactobacillus plantarum) protein is 2-aminoethylphosphonate--pyruvate transaminase.